The primary structure comprises 316 residues: 4-hydroxy-3-methylbut-2-enyl diphosphate reductase (316 aa).

Cys12 contacts [4Fe-4S] cluster. The (2E)-4-hydroxy-3-methylbut-2-enyl diphosphate site is built by His41 and His74. 2 residues coordinate dimethylallyl diphosphate: His41 and His74. Isopentenyl diphosphate-binding residues include His41 and His74. Cys96 is a [4Fe-4S] cluster binding site. A (2E)-4-hydroxy-3-methylbut-2-enyl diphosphate-binding site is contributed by His124. His124 serves as a coordination point for dimethylallyl diphosphate. His124 lines the isopentenyl diphosphate pocket. Glu126 (proton donor) is an active-site residue. Thr168 is a binding site for (2E)-4-hydroxy-3-methylbut-2-enyl diphosphate. Cys198 contributes to the [4Fe-4S] cluster binding site. Positions 226, 227, 228, and 270 each coordinate (2E)-4-hydroxy-3-methylbut-2-enyl diphosphate. Positions 226, 227, 228, and 270 each coordinate dimethylallyl diphosphate. Residues Ser226, Ser227, Asn228, and Ser270 each contribute to the isopentenyl diphosphate site.

This sequence belongs to the IspH family. [4Fe-4S] cluster serves as cofactor.

It catalyses the reaction isopentenyl diphosphate + 2 oxidized [2Fe-2S]-[ferredoxin] + H2O = (2E)-4-hydroxy-3-methylbut-2-enyl diphosphate + 2 reduced [2Fe-2S]-[ferredoxin] + 2 H(+). The catalysed reaction is dimethylallyl diphosphate + 2 oxidized [2Fe-2S]-[ferredoxin] + H2O = (2E)-4-hydroxy-3-methylbut-2-enyl diphosphate + 2 reduced [2Fe-2S]-[ferredoxin] + 2 H(+). It functions in the pathway isoprenoid biosynthesis; dimethylallyl diphosphate biosynthesis; dimethylallyl diphosphate from (2E)-4-hydroxy-3-methylbutenyl diphosphate: step 1/1. It participates in isoprenoid biosynthesis; isopentenyl diphosphate biosynthesis via DXP pathway; isopentenyl diphosphate from 1-deoxy-D-xylulose 5-phosphate: step 6/6. Catalyzes the conversion of 1-hydroxy-2-methyl-2-(E)-butenyl 4-diphosphate (HMBPP) into a mixture of isopentenyl diphosphate (IPP) and dimethylallyl diphosphate (DMAPP). Acts in the terminal step of the DOXP/MEP pathway for isoprenoid precursor biosynthesis. The protein is 4-hydroxy-3-methylbut-2-enyl diphosphate reductase of Acinetobacter baylyi (strain ATCC 33305 / BD413 / ADP1).